A 455-amino-acid polypeptide reads, in one-letter code: Anaerobic glycerol-3-phosphate dehydrogenase subunit B (455 aa).

It belongs to the anaerobic G-3-P dehydrogenase subunit B family. Composed of a catalytic GlpA/B dimer and of membrane bound GlpC. Requires FMN as cofactor.

It carries out the reaction a quinone + sn-glycerol 3-phosphate = dihydroxyacetone phosphate + a quinol. It functions in the pathway polyol metabolism; glycerol degradation via glycerol kinase pathway; glycerone phosphate from sn-glycerol 3-phosphate (anaerobic route): step 1/1. In terms of biological role, conversion of glycerol 3-phosphate to dihydroxyacetone. Uses fumarate or nitrate as electron acceptor. In Aliivibrio fischeri (strain MJ11) (Vibrio fischeri), this protein is Anaerobic glycerol-3-phosphate dehydrogenase subunit B.